A 176-amino-acid chain; its full sequence is MSSNQQPVVLGKLGSCHGIKGWLKITAYTDSVEGIFDYSPWLIKENGEWREVKVIQWRYQGKAVVAELEGVTTRERAQMLTNCEIGILPEQMNDLPEDEFYWRDLIGCEVINTNGYNMGVVDQIVETGSNDVLLVKANAKDSFGKVERMLPFVPGQFILKVDVQGKQILVDWDPDF.

One can recognise a PRC barrel domain in the interval 97–176; that stretch reads EDEFYWRDLI…QILVDWDPDF (80 aa).

It belongs to the RimM family. Binds ribosomal protein uS19.

It is found in the cytoplasm. In terms of biological role, an accessory protein needed during the final step in the assembly of 30S ribosomal subunit, possibly for assembly of the head region. Essential for efficient processing of 16S rRNA. May be needed both before and after RbfA during the maturation of 16S rRNA. It has affinity for free ribosomal 30S subunits but not for 70S ribosomes. The sequence is that of Ribosome maturation factor RimM from Shewanella sp. (strain ANA-3).